The following is a 374-amino-acid chain: Conserved virulence factor C (374 aa).

It belongs to the CvfC family.

Required for hemolysin production. This is Conserved virulence factor C (cvfC) from Staphylococcus aureus (strain MRSA252).